A 541-amino-acid polypeptide reads, in one-letter code: Protein wntless homolog (541 aa).

At 1 to 15 the chain is on the cytoplasmic side; the sequence is MAGAIIENMSTKKLC. The helical transmembrane segment at 16 to 36 threads the bilayer; the sequence is IVGGILLVFQIVAFLVGGLIA. At 37-232 the chain is on the lumenal side; the sequence is PAPTTAVSYV…GIHQNGGFTK (196 aa). Residues 101–202 are interaction with Wnt proteins; it reads MEMSPWFQFM…KYYLLNIRLP (102 aa). Residues 233 to 253 form a helical membrane-spanning segment; it reads VWFAMKTFLTPSIFIIMVWYW. The Cytoplasmic segment spans residues 254-268; that stretch reads RRITMMSRPPVLLEK. The chain crosses the membrane as a helical span at residues 269–289; the sequence is VIFALGISMTFINIPVEWFSI. The Lumenal portion of the chain corresponds to 290 to 303; it reads GFDWTWMLLFGDIR. Residues 304–324 traverse the membrane as a helical segment; that stretch reads QGIFYAMLLSFWIIFCGEHMM. Residues 325–331 lie on the Cytoplasmic side of the membrane; the sequence is DQHERNH. A helical transmembrane segment spans residues 332 to 352; it reads IAGYWKQVGPIAVGSFCLFIF. Topologically, residues 353–380 are lumenal; the sequence is DMCERGVQLTNPFYSIWTTDVGTELAMA. Residues 381 to 401 form a helical membrane-spanning segment; it reads FIIVAGICLCLYFLFLCFMVF. Topologically, residues 402–431 are cytoplasmic; that stretch reads QVFRNISGKQSSLPAMSKVRRLHYEGLIFR. A helical transmembrane segment spans residues 432–452; the sequence is FKFLMLITLACAAMTVIFFIV. Residues 453 to 471 lie on the Lumenal side of the membrane; sequence SQVTEGHWKWGGVTVQVSS. The helical transmembrane segment at 472–492 threads the bilayer; that stretch reads AFFTGIYGMWNLYVFALMFLY. Residues 493–541 lie on the Cytoplasmic side of the membrane; that stretch reads APSHKNYGEDQSNGDLGVHSGEELQLTTTITHVDGPTEIYKLTRKEAQE.

It belongs to the wntless family. Interacts with WNT3A. Interacts with WNT1, WNT3 and WNT5A. N-glycosylated. As to expression, expressed in the brain, skeletal muscle, heart muscle, lung, gut, liver, and kidney (at protein level). In the brain, expressed in the cortex, striatum, ventral tegmentum, nucleus accumbens and to a lesser extent in the Purkinjie cells in the cerebellum. Expressed in eye iridocorneal angle.

The protein resides in the golgi apparatus membrane. It localises to the cytoplasmic vesicle membrane. The protein localises to the cell membrane. It is found in the endoplasmic reticulum membrane. Its subcellular location is the early endosome membrane. In terms of biological role, regulates Wnt proteins sorting and secretion in a feedback regulatory mechanism. This reciprocal interaction plays a key role in the regulation of expression, subcellular location, binding and organelle-specific association of Wnt proteins. Also plays an important role in establishment of the anterior-posterior body axis formation during development. This chain is Protein wntless homolog (Wls), found in Rattus norvegicus (Rat).